The sequence spans 149 residues: Calmodulin-like protein (149 aa).

EF-hand domains are found at residues 6–41, 42–76, 78–113, and 113–148; these read TTQA…VGSN, PTQQ…KMKY, DSEA…IGEK, and KLTK…SKSF. Positions 19, 21, 23, 25, and 30 each coordinate Ca(2+).

Belongs to the calmodulin family.

It is found in the contractile vacuole. Mediates the control of a large number of enzymes, ion channels and other proteins by Ca(2+) ions. Among the enzymes to be stimulated by the calmodulin-Ca(2+) complex are a number of protein kinases and phosphatases. In Dictyostelium discoideum (Social amoeba), this protein is Calmodulin-like protein (calB).